The following is a 120-amino-acid chain: MPEEDLVELKFRLYDGSDVGPFQYSPTATVSMLKERIVSEWPKDKKIVPKSASDIKLINAGKILENGKTVAQCKAPFDDLPKSVITMHVVVQLSPTKARPEKKIEKEEAPQRSFCSCTIM.

Positions 7–73 (VELKFRLYDG…LENGKTVAQC (67 aa)) constitute a Ubiquitin-like domain. Residue Cys-115 is the site of S-palmitoyl cysteine attachment. A Cysteine methyl ester modification is found at Cys-117. Cys-117 carries the S-farnesyl cysteine lipid modification. Residues 118 to 120 (TIM) constitute a propeptide, removed in mature form.

As to expression, ubiquitous.

Its subcellular location is the cell membrane. Functionally, may serve as docking site to facilitate the association of other proteins to the plasma membrane. This chain is Membrane-anchored ubiquitin-fold protein 4 (MUB4), found in Arabidopsis thaliana (Mouse-ear cress).